Reading from the N-terminus, the 452-residue chain is Xaa-Pro dipeptidase 1 (452 aa).

Mn(2+) contacts are provided by D247, D258, H338, E383, and E422.

This sequence belongs to the peptidase M24B family. Bacterial-type prolidase subfamily. Requires Mn(2+) as cofactor.

It catalyses the reaction Xaa-L-Pro dipeptide + H2O = an L-alpha-amino acid + L-proline. Splits dipeptides with a prolyl residue in the C-terminal position. In Idiomarina loihiensis (strain ATCC BAA-735 / DSM 15497 / L2-TR), this protein is Xaa-Pro dipeptidase 1.